The chain runs to 1595 residues: Collagen-like protein 2 (1595 aa).

Residues asparagine 87 and asparagine 134 are each glycosylated (N-linked (GlcNAc...) asparagine; by host). 4 consecutive Collagen-like domains span residues 97-155, 175-233, 236-295, and 299-358; these read LRGE…NGDV, QVGL…KGEG, GSKG…KGDI, and GIKG…KGMK. A compositionally biased stretch (low complexity) spans 181–190; the sequence is SQGDQGYKGD. 2 disordered regions span residues 181-577 and 604-1326; these read SQGD…SPDL and TDIK…GIKG. Basic and acidic residues-rich tracts occupy residues 191–200, 209–448, 456–466, 474–501, 510–561, 606–615, 622–702, 718–825, 832–883, 895–1041, 1048–1098, 1107–1151, 1159–1250, and 1265–1300; these read QGSKGDKGQK, KGDK…KGTK, YKGDIGDKGIK, DKGD…DKGY, DNGE…DKGE, IKGEKGDKGE, KGDK…DKGD, KGDK…DKGI, KGDK…KGFK, KGNK…DQGT, KGDK…KGIK, NKGD…KGDQ, and KGDK…DQGI. Residues asparagine 274, asparagine 280, and asparagine 286 are each glycosylated (N-linked (GlcNAc...) asparagine; by host). N-linked (GlcNAc...) asparagine; by host glycans are attached at residues asparagine 373, asparagine 382, asparagine 400, and asparagine 409. 5 consecutive Collagen-like domains span residues 380 to 559, 608 to 907, 920 to 1039, 1043 to 1102, and 1128 to 1307; these read GDNG…KGDK, GEKG…KGEN, GDKG…KGDK, GTNG…KGET, and GDQG…SGAS. Residues asparagine 1345, asparagine 1420, and asparagine 1545 are each glycosylated (N-linked (GlcNAc...) asparagine; by host). The disordered stretch occupies residues 1538-1585; it reads SAFDKGGNGSIRFNPPSSGTKGSGGGGSVQGGGGTIPNDGYPGGNGGP. Gly residues predominate over residues 1558–1585; the sequence is KGSGGGGSVQGGGGTIPNDGYPGGNGGP.

May be hydroxylated on lysine by the viral-encoded procollagen-lysine,2-oxoglutarate 5-dioxygenase.

It is found in the virion. Functionally, may participate in the formation of a layer of cross-linked glycosylated fibrils at the viral surface thus giving it a hairy-like appearance. The sequence is that of Collagen-like protein 2 from Acanthamoeba polyphaga (Amoeba).